The sequence spans 676 residues: Ion-translocating oxidoreductase complex subunit C (676 aa).

2 consecutive 4Fe-4S ferredoxin-type domains span residues 369-397 (GEPQEEQNCIRCSACADACPADLLPQQLY) and 407-436 (KATTHNIADCIECGACAWVCPSNIPLVQYF). [4Fe-4S] cluster is bound by residues C377, C380, C383, C387, C416, C419, C422, and C426. The tract at residues 600–652 (ARKLEQQQANAEPEQQVDPRKAAVEAAIARAKARKLEQQQANAEPEEQVDPRK) is disordered. The span at 605–615 (QQQANAEPEQQ) shows a compositional bias: low complexity.

This sequence belongs to the 4Fe4S bacterial-type ferredoxin family. RnfC subfamily. In terms of assembly, the complex is composed of six subunits: RsxA, RsxB, RsxC, RsxD, RsxE and RsxG. [4Fe-4S] cluster is required as a cofactor.

It localises to the cell inner membrane. Its function is as follows. Part of a membrane-bound complex that couples electron transfer with translocation of ions across the membrane. Required to maintain the reduced state of SoxR. The chain is Ion-translocating oxidoreductase complex subunit C from Escherichia coli (strain SMS-3-5 / SECEC).